Here is a 240-residue protein sequence, read N- to C-terminus: Small ribosomal subunit protein uS3 (240 aa).

The 69-residue stretch at 39–107 (IREFIKEECK…ELHLNIVEVR (69 aa)) folds into the KH type-2 domain. The segment covering 212-222 (PQARDRRHAEL) has biased composition (basic and acidic residues). The interval 212 to 240 (PQARDRRHAELQEGGGPRPQGGGRPRRDR) is disordered. Positions 224–234 (EGGGPRPQGGG) are enriched in gly residues.

This sequence belongs to the universal ribosomal protein uS3 family. In terms of assembly, part of the 30S ribosomal subunit. Forms a tight complex with proteins S10 and S14.

Functionally, binds the lower part of the 30S subunit head. Binds mRNA in the 70S ribosome, positioning it for translation. This Dinoroseobacter shibae (strain DSM 16493 / NCIMB 14021 / DFL 12) protein is Small ribosomal subunit protein uS3.